The chain runs to 136 residues: Large ribosomal subunit protein uL13 (136 aa).

The protein belongs to the universal ribosomal protein uL13 family. Part of the 50S ribosomal subunit.

This protein is one of the early assembly proteins of the 50S ribosomal subunit, although it is not seen to bind rRNA by itself. It is important during the early stages of 50S assembly. This Thermoplasma volcanium (strain ATCC 51530 / DSM 4299 / JCM 9571 / NBRC 15438 / GSS1) protein is Large ribosomal subunit protein uL13.